The sequence spans 1017 residues: Nonsense-mediated mRNA decay factor SMG5 (1017 aa).

N-acetylserine is present on Ser-2. Residues Ser-2 and Ser-423 each carry the phosphoserine modification. 2 disordered regions span residues 406–562 (GENP…PSEA) and 597–640 (TEPN…CRNE). Residues 448–467 (KSRKHSRLSCLRRRRRHHPP) are compositionally biased toward basic residues. Low complexity predominate over residues 486–496 (DSAQASDGSDS). The span at 620–629 (ASEDGSESEG) shows a compositional bias: acidic residues. Residues 798–842 (AQSEQESLLQQAQAQFRMAEEEARRNRLMRDMAQLRLQLEVSQLE) adopt a coiled-coil conformation. The PINc domain occupies 873–996 (RQLATSGRFI…GPMQAALQAA (124 aa)).

As to quaternary structure, interacts with TERT, PPP2CA and SMG1. Part of a complex that contains SMG1, SMG5, SMG7, PPP2CA, a short isoform of UPF3A (isoform UPF3AS, but not isoform UPF3AL) and phosphorylated UPF1. Not detected in complexes that contain unphosphorylated UPF1.

The protein localises to the cytoplasm. It localises to the nucleus. Functionally, plays a role in nonsense-mediated mRNA decay. Does not have RNase activity by itself. Promotes dephosphorylation of UPF1. Together with SMG7 is thought to provide a link to the mRNA degradation machinery involving exonucleolytic pathways, and to serve as an adapter for UPF1 to protein phosphatase 2A (PP2A), thereby triggering UPF1 dephosphorylation. Necessary for TERT activity. In Mus musculus (Mouse), this protein is Nonsense-mediated mRNA decay factor SMG5.